Consider the following 332-residue polypeptide: D-alanine--D-alanine ligase (332 aa).

The ATP-grasp domain maps to 112–312; sequence KRIWRADGLP…YPDLCLRILA (201 aa). Residue 138–193 participates in ATP binding; the sequence is FQELGAPMIVKPSREGSTIGLTKVTSLGQCEQAYRLAAQHDPEVLCEQFIDGDETT. The Mg(2+) site is built by D265, E279, and N281.

This sequence belongs to the D-alanine--D-alanine ligase family. Requires Mg(2+) as cofactor. It depends on Mn(2+) as a cofactor.

The protein localises to the cytoplasm. The enzyme catalyses 2 D-alanine + ATP = D-alanyl-D-alanine + ADP + phosphate + H(+). The protein operates within cell wall biogenesis; peptidoglycan biosynthesis. In terms of biological role, cell wall formation. This is D-alanine--D-alanine ligase from Acidovorax ebreus (strain TPSY) (Diaphorobacter sp. (strain TPSY)).